A 330-amino-acid polypeptide reads, in one-letter code: RNA polymerase sigma factor RpoS (330 aa).

The tract at residues Asp-56–Ala-89 is sigma-70 factor domain-1. Positions Met-94–Thr-164 are sigma-70 factor domain-2. An Interaction with polymerase core subunit RpoC motif is present at residues Asp-118–Glu-121. A sigma-70 factor domain-3 region spans residues Glu-174–Thr-249. The interval Trp-262–Glu-315 is sigma-70 factor domain-4. Residues Leu-288–Val-307 constitute a DNA-binding region (H-T-H motif).

This sequence belongs to the sigma-70 factor family. RpoS subfamily. As to quaternary structure, interacts with the RNA polymerase core enzyme.

It is found in the cytoplasm. In terms of biological role, sigma factors are initiation factors that promote the attachment of RNA polymerase to specific initiation sites and are then released. This sigma factor is the master transcriptional regulator of the stationary phase and the general stress response. The polypeptide is RNA polymerase sigma factor RpoS (Salmonella dublin).